Consider the following 259-residue polypeptide: 5'-nucleotidase SurE (259 aa).

Residues Asp-8, Asp-9, Ser-40, and Asn-92 each coordinate a divalent metal cation.

The protein belongs to the SurE nucleotidase family. Requires a divalent metal cation as cofactor.

Its subcellular location is the cytoplasm. The enzyme catalyses a ribonucleoside 5'-phosphate + H2O = a ribonucleoside + phosphate. In terms of biological role, nucleotidase that shows phosphatase activity on nucleoside 5'-monophosphates. This chain is 5'-nucleotidase SurE, found in Xanthomonas campestris pv. campestris (strain B100).